The sequence spans 360 residues: Chorismate synthase (360 aa).

NADP(+) contacts are provided by Arg48 and Arg54. FMN contacts are provided by residues 125–127, 242–243, Gly283, 298–302, and Arg324; these read RSS, NG, and KPTSS.

It belongs to the chorismate synthase family. In terms of assembly, homotetramer. FMNH2 is required as a cofactor.

It catalyses the reaction 5-O-(1-carboxyvinyl)-3-phosphoshikimate = chorismate + phosphate. It participates in metabolic intermediate biosynthesis; chorismate biosynthesis; chorismate from D-erythrose 4-phosphate and phosphoenolpyruvate: step 7/7. Its function is as follows. Catalyzes the anti-1,4-elimination of the C-3 phosphate and the C-6 proR hydrogen from 5-enolpyruvylshikimate-3-phosphate (EPSP) to yield chorismate, which is the branch point compound that serves as the starting substrate for the three terminal pathways of aromatic amino acid biosynthesis. This reaction introduces a second double bond into the aromatic ring system. This Gluconobacter oxydans (strain 621H) (Gluconobacter suboxydans) protein is Chorismate synthase.